The sequence spans 172 residues: Adenine phosphoribosyltransferase (172 aa).

This sequence belongs to the purine/pyrimidine phosphoribosyltransferase family. Homodimer.

It localises to the cytoplasm. The enzyme catalyses AMP + diphosphate = 5-phospho-alpha-D-ribose 1-diphosphate + adenine. The protein operates within purine metabolism; AMP biosynthesis via salvage pathway; AMP from adenine: step 1/1. Functionally, catalyzes a salvage reaction resulting in the formation of AMP, that is energically less costly than de novo synthesis. The protein is Adenine phosphoribosyltransferase of Anaeromyxobacter dehalogenans (strain 2CP-1 / ATCC BAA-258).